Here is a 911-residue protein sequence, read N- to C-terminus: DNA mismatch repair protein MutS (911 aa).

The segment at 1-95 (MALQGNLFGD…PWSHHSQVTP (95 aa)) is disordered. Over residues 23 to 42 (KRQDEPDQLDDHELTQDAKQ) the composition is skewed to basic and acidic residues. 727–734 (GPNASGKS) provides a ligand contact to ATP.

The protein belongs to the DNA mismatch repair MutS family.

Functionally, this protein is involved in the repair of mismatches in DNA. It is possible that it carries out the mismatch recognition step. This protein has a weak ATPase activity. The sequence is that of DNA mismatch repair protein MutS from Synechococcus sp. (strain CC9311).